The sequence spans 286 residues: MENSMKKKKSFKESEDEELRRGPWTLEEDTLLTNYILHNGEGRWNHVAKCAGLKRTGKSCRLRWLNYLKPDIRRGNLTPQEQLLILELHSKWGNRWSKIAQYLPGRTDNEIKNYWRTRVQKQARQLNIESNSDKFFDAVRSFWVPRLIEKMEQNSSTTTTYCCPQNNNNNSLLLPSQSHDSLSMQKDIDYSGFSNIDGSSSTSTCMSHLTTVPHFMDQSNTNIIDGSMCFHEGNVQEFGGYVPGMEDYMVNSDISMECHVADGYSAYEDVTQDPMWNVDDIWQFRE.

HTH myb-type domains lie at 16-68 and 69-123; these read DEEL…LNYL and KPDI…QKQA. DNA-binding regions (H-T-H motif) lie at residues 44–68 and 96–119; these read WNHVAKCAGLKRTGKSCRLRWLNYL and WSKIAQYLPGRTDNEIKNYWRTRV.

Expressed in leaves and flowers.

It localises to the nucleus. Functionally, transcription repressor of phosphate (Pi) starvation-induced genes. Negatively regulates Pi starvation responses via the repression of gibberellic acid (GA) biosynthesis and signaling. Modulates root architecture, phosphatase activity, and Pi uptake and accumulation. The chain is Transcription factor MYB62 from Arabidopsis thaliana (Mouse-ear cress).